The sequence spans 630 residues: Chaperone protein HtpG (630 aa).

The a; substrate-binding stretch occupies residues 1 to 336 (MTTTVEQTAE…TADLPLNVSR (336 aa)). The segment at 337–551 (EMIQESPILA…EDGYDRQMEK (215 aa)) is b. A c region spans residues 552 to 630 (ILQNAGRLQG…VFERSVRSEG (79 aa)).

It belongs to the heat shock protein 90 family. Homodimer.

Its subcellular location is the cytoplasm. Functionally, molecular chaperone. Has ATPase activity. The protein is Chaperone protein HtpG of Rhizobium etli (strain ATCC 51251 / DSM 11541 / JCM 21823 / NBRC 15573 / CFN 42).